The chain runs to 279 residues: DegV domain-containing protein CA_C0701 (279 aa).

The DegV domain maps to 4–277 (IKIVTDSTCD…TKACGVFFIE (274 aa)). Residues Thr62 and Ser94 each contribute to the hexadecanoate site.

In terms of biological role, may bind long-chain fatty acids, such as palmitate, and may play a role in lipid transport or fatty acid metabolism. The polypeptide is DegV domain-containing protein CA_C0701 (Clostridium acetobutylicum (strain ATCC 824 / DSM 792 / JCM 1419 / IAM 19013 / LMG 5710 / NBRC 13948 / NRRL B-527 / VKM B-1787 / 2291 / W)).